Here is a 95-residue protein sequence, read N- to C-terminus: Small ribosomal subunit protein bS6 (95 aa).

It belongs to the bacterial ribosomal protein bS6 family.

Its function is as follows. Binds together with bS18 to 16S ribosomal RNA. The polypeptide is Small ribosomal subunit protein bS6 (Corynebacterium glutamicum (strain ATCC 13032 / DSM 20300 / JCM 1318 / BCRC 11384 / CCUG 27702 / LMG 3730 / NBRC 12168 / NCIMB 10025 / NRRL B-2784 / 534)).